Reading from the N-terminus, the 121-residue chain is Ribonuclease P protein component (121 aa).

The protein belongs to the RnpA family. In terms of assembly, consists of a catalytic RNA component (M1 or rnpB) and a protein subunit.

The enzyme catalyses Endonucleolytic cleavage of RNA, removing 5'-extranucleotides from tRNA precursor.. Its function is as follows. RNaseP catalyzes the removal of the 5'-leader sequence from pre-tRNA to produce the mature 5'-terminus. It can also cleave other RNA substrates such as 4.5S RNA. The protein component plays an auxiliary but essential role in vivo by binding to the 5'-leader sequence and broadening the substrate specificity of the ribozyme. This chain is Ribonuclease P protein component, found in Desulfosudis oleivorans (strain DSM 6200 / JCM 39069 / Hxd3) (Desulfococcus oleovorans).